The primary structure comprises 423 residues: 5-hydroxytryptamine receptor 1A (423 aa).

The disordered stretch occupies residues 1-20 (MEGLSPGQGNNTTSSEGPFG). At 1–38 (MEGLSPGQGNNTTSSEGPFGTRGNATGISDVTFSYQVI) the chain is on the extracellular side. Residues 7–16 (GQGNNTTSSE) show a composition bias toward polar residues. Residues Asn-10, Asn-11, and Asn-24 are each glycosylated (N-linked (GlcNAc...) asparagine). The chain crosses the membrane as a helical span at residues 39 to 59 (TSLLLGTLIFCAVLGNACVVA). The Cytoplasmic portion of the chain corresponds to 60–73 (AIALERSLQNVANY). Residues 74-98 (LIGSLAVTDLMVSVLVLPMAALYQV) form a helical membrane-spanning segment. Over 99–107 (LNKWTLGQV) the chain is Extracellular. Residues 108–132 (TCDLFIALDVLCCTSSILHLCAIAL) form a helical membrane-spanning segment. A disulfide bond links Cys-109 and Cys-187. Serotonin contacts are provided by Asp-116 and Cys-120. Positions 133–135 (DRY) match the DRY motif; important for ligand-induced conformation changes motif. Over 133–152 (DRYWAITDPIDYVNKRTPRR) the chain is Cytoplasmic. Residues 153–174 (AAALISLTWLIGFLISIPPMLG) form a helical membrane-spanning segment. Topologically, residues 175–193 (WRTPEDRSDPDACTISKDH) are extracellular. The chain crosses the membrane as a helical span at residues 194 to 216 (GYTIYSTFGAFYIPLLLMLVLYG). Residues 217-346 (RIFRAARFRI…LARERKTVKT (130 aa)) lie on the Cytoplasmic side of the membrane. The tract at residues 235 to 277 (RKGADARSGVSPAPQPRKSVNGEPGGREWRQGPGSKAGGPLCT) is disordered. 3 residues coordinate 1D-myo-inositol 4-phosphate: Lys-345, Thr-346, and Gly-352. The chain crosses the membrane as a helical span at residues 347 to 370 (LGIIMGTFILCWLPFFIVALVLPF). The Extracellular segment spans residues 371 to 378 (CESSCHMP). Residues 379-403 (TLLGAIINWLGYSNSLLNPVIYAYF) form a helical membrane-spanning segment. Residues 396-400 (NPVIY) carry the NPxxY motif; important for ligand-induced conformation changes and signaling motif. 1D-myo-inositol 4-phosphate-binding residues include Phe-403, Asn-404, and Lys-405. The Cytoplasmic segment spans residues 404 to 423 (NKDFQNAFKKIVRCKFCRRR).

Belongs to the G-protein coupled receptor 1 family. 5-hydroxytryptamine receptor subfamily. HTR1A sub-subfamily. In terms of assembly, heterodimer; heterodimerizes with GPER1. Interacts with YIF1B. Interacts with GPR39 and GALR1.

The protein resides in the cell membrane. It localises to the cell projection. The protein localises to the dendrite. Its activity is regulated as follows. G-protein coupled receptor activity is regulated by lipids: phosphatidylinositol 4-phosphate increases HTR1A-mediated activity. Its function is as follows. G-protein coupled receptor for 5-hydroxytryptamine (serotonin). Also functions as a receptor for various drugs and psychoactive substances. Ligand binding causes a conformation change that triggers signaling via guanine nucleotide-binding proteins (G proteins) and modulates the activity of downstream effectors, such as adenylate cyclase. HTR1A is coupled to G(i)/G(o) G alpha proteins and mediates inhibitory neurotransmission: signaling inhibits adenylate cyclase activity and activates a phosphatidylinositol-calcium second messenger system that regulates the release of Ca(2+) ions from intracellular stores. Beta-arrestin family members regulate signaling by mediating both receptor desensitization and resensitization processes. The protein is 5-hydroxytryptamine receptor 1A (HTR1A) of Vulpes vulpes (Red fox).